A 403-amino-acid polypeptide reads, in one-letter code: Sorting nexin-32 (403 aa).

One can recognise a PX domain in the interval 20 to 168 (LQGDSSLQVE…VFLEYGQDLS (149 aa)). The stretch at 258 to 335 (NQLRTSFLKL…KARTRNREVR (78 aa)) forms a coiled coil.

The protein belongs to the sorting nexin family.

Functionally, may be involved in several stages of intracellular trafficking. The polypeptide is Sorting nexin-32 (SNX32) (Homo sapiens (Human)).